Reading from the N-terminus, the 892-residue chain is DNA mismatch repair protein MutS (892 aa).

607-614 (GPNMSGKS) provides a ligand contact to ATP. A disordered region spans residues 826–854 (ETKAETEEESQLSFFGGEQSSKKQDKPVL). Over residues 845–854 (SSKKQDKPVL) the composition is skewed to basic and acidic residues.

This sequence belongs to the DNA mismatch repair MutS family.

This protein is involved in the repair of mismatches in DNA. It is possible that it carries out the mismatch recognition step. This protein has a weak ATPase activity. The chain is DNA mismatch repair protein MutS from Bacillus cereus (strain AH187).